A 420-amino-acid polypeptide reads, in one-letter code: Gamma-glutamyl phosphate reductase (420 aa).

This sequence belongs to the gamma-glutamyl phosphate reductase family.

Its subcellular location is the cytoplasm. It catalyses the reaction L-glutamate 5-semialdehyde + phosphate + NADP(+) = L-glutamyl 5-phosphate + NADPH + H(+). It participates in amino-acid biosynthesis; L-proline biosynthesis; L-glutamate 5-semialdehyde from L-glutamate: step 2/2. Catalyzes the NADPH-dependent reduction of L-glutamate 5-phosphate into L-glutamate 5-semialdehyde and phosphate. The product spontaneously undergoes cyclization to form 1-pyrroline-5-carboxylate. This Streptococcus pneumoniae (strain Hungary19A-6) protein is Gamma-glutamyl phosphate reductase.